The chain runs to 511 residues: Tyrosine--tRNA ligase, chloroplastic/mitochondrial (511 aa).

Tyrosine 118 is an L-tyrosine binding site. Aspartate 122 provides a ligand contact to ATP. The 'HIGH' region motif lies at 123–132; sequence PTAESLHLGN. Residues aspartate 162, tyrosine 256, glutamine 260, aspartate 263, and glutamine 282 each contribute to the L-tyrosine site. Residues 318 to 322 carry the 'KMSKS' region motif; it reads KFGKS. ATP is bound at residue lysine 321. The S4 RNA-binding domain occupies 444–510; the sequence is LSIVDLSVSA…GKKNKVVVRI (67 aa).

It belongs to the class-I aminoacyl-tRNA synthetase family.

It localises to the plastid. The protein localises to the chloroplast. Its subcellular location is the mitochondrion. It carries out the reaction tRNA(Tyr) + L-tyrosine + ATP = L-tyrosyl-tRNA(Tyr) + AMP + diphosphate + H(+). In terms of biological role, catalyzes the attachment of tyrosine to tRNA(Tyr) in a two-step reaction: tyrosine is first activated by ATP to form Tyr-AMP and then transferred to the acceptor end of tRNA(Tyr). This is Tyrosine--tRNA ligase, chloroplastic/mitochondrial from Arabidopsis thaliana (Mouse-ear cress).